A 944-amino-acid polypeptide reads, in one-letter code: Translation initiation factor IF-2 (944 aa).

2 disordered regions span residues 50–91 (SAKT…FAGK) and 114–349 (KVEV…VPAT). Basic and acidic residues-rich tracts occupy residues 75-86 (ESAKKNKEDHPR), 124-157 (VVTE…ETKD), 164-185 (AEVK…EKKK), and 199-233 (KRAE…DNRR). Positions 267–280 (SSGSAPATDSFTPA) are enriched in polar residues. Basic and acidic residues predominate over residues 286-307 (SRRDRDRKKSDNNRDNTKDGNR). Polar residues-rich tracts occupy residues 317–331 (NRNQ…NWNQ) and 338–348 (YQNNQSSSVPA). One can recognise a tr-type G domain in the interval 443–614 (ERPAVVTIMG…LLVAEVQELK (172 aa)). Residues 452-459 (GHVDHGKT) are G1. 452 to 459 (GHVDHGKT) provides a ligand contact to GTP. Residues 477 to 481 (GITQH) are G2. Residues 498–501 (DTPG) form a G3 region. GTP-binding positions include 498-502 (DTPGH) and 552-555 (NKID). The segment at 552–555 (NKID) is G4. A G5 region spans residues 590–592 (SAK).

Belongs to the TRAFAC class translation factor GTPase superfamily. Classic translation factor GTPase family. IF-2 subfamily.

The protein localises to the cytoplasm. One of the essential components for the initiation of protein synthesis. Protects formylmethionyl-tRNA from spontaneous hydrolysis and promotes its binding to the 30S ribosomal subunits. Also involved in the hydrolysis of GTP during the formation of the 70S ribosomal complex. The chain is Translation initiation factor IF-2 (infB) from Lactococcus lactis subsp. lactis (strain IL1403) (Streptococcus lactis).